A 131-amino-acid polypeptide reads, in one-letter code: MKLAAFYKGRDLKKPSGGKKGRVRKTKKKALCGGPPQIPKLGERDLRLVERVTGGNLKVRVREVRYANVYIPKERRHVKAKILSILSTPANPDFARRNLIVKGAVIQTEVGRAVVTSRPGQDGVINAVLIE.

A disordered region spans residues 11 to 36; it reads DLKKPSGGKKGRVRKTKKKALCGGPP. The segment covering 16–30 has biased composition (basic residues); that stretch reads SGGKKGRVRKTKKKA.

Belongs to the eukaryotic ribosomal protein eS8 family. As to quaternary structure, part of the 30S ribosomal subunit.

This is Small ribosomal subunit protein eS8 from Pyrobaculum islandicum (strain DSM 4184 / JCM 9189 / GEO3).